A 367-amino-acid chain; its full sequence is Aminomethyltransferase (367 aa).

It belongs to the GcvT family. The glycine cleavage system is composed of four proteins: P, T, L and H.

The catalysed reaction is N(6)-[(R)-S(8)-aminomethyldihydrolipoyl]-L-lysyl-[protein] + (6S)-5,6,7,8-tetrahydrofolate = N(6)-[(R)-dihydrolipoyl]-L-lysyl-[protein] + (6R)-5,10-methylene-5,6,7,8-tetrahydrofolate + NH4(+). Its function is as follows. The glycine cleavage system catalyzes the degradation of glycine. The sequence is that of Aminomethyltransferase from Mycobacterium avium (strain 104).